The following is a 354-amino-acid chain: Neuronal growth regulator 1 (354 aa).

A signal peptide spans methionine 1–serine 37. Ig-like C2-type domains lie at valine 38–threonine 134, proline 139–valine 221, and proline 225–asparagine 313. Cysteines 60 and 118 form a disulfide. N-linked (GlcNAc...) asparagine glycosylation is found at asparagine 73 and asparagine 155. Cystine bridges form between cysteine 160–cysteine 203 and cysteine 245–cysteine 297. Position 187 is a phosphotyrosine (tyrosine 187). Asparagine 275, asparagine 286, asparagine 294, and asparagine 307 each carry an N-linked (GlcNAc...) asparagine glycan. Residue glycine 324 is the site of GPI-anchor amidated glycine attachment. Positions serine 325–glutamine 354 are cleaved as a propeptide — removed in mature form.

It belongs to the immunoglobulin superfamily. IgLON family.

The protein resides in the cell membrane. May be involved in cell-adhesion. May function as a trans-neural growth-promoting factor in regenerative axon sprouting in the mammalian brain. The polypeptide is Neuronal growth regulator 1 (NEGR1) (Pongo abelii (Sumatran orangutan)).